The primary structure comprises 482 residues: Methylenetetrahydrofolate--tRNA-(uracil-5-)-methyltransferase TrmFO (482 aa).

An FAD-binding site is contributed by 11–16 (GGGLAG). The segment at 450 to 482 (LRQPSPWSAEDSPRAALPIPEPTPLGPASGSSE) is disordered.

It belongs to the MnmG family. TrmFO subfamily. The cofactor is FAD.

It is found in the cytoplasm. It catalyses the reaction uridine(54) in tRNA + (6R)-5,10-methylene-5,6,7,8-tetrahydrofolate + NADH + H(+) = 5-methyluridine(54) in tRNA + (6S)-5,6,7,8-tetrahydrofolate + NAD(+). It carries out the reaction uridine(54) in tRNA + (6R)-5,10-methylene-5,6,7,8-tetrahydrofolate + NADPH + H(+) = 5-methyluridine(54) in tRNA + (6S)-5,6,7,8-tetrahydrofolate + NADP(+). Catalyzes the folate-dependent formation of 5-methyl-uridine at position 54 (M-5-U54) in all tRNAs. In Rhodospirillum rubrum (strain ATCC 11170 / ATH 1.1.1 / DSM 467 / LMG 4362 / NCIMB 8255 / S1), this protein is Methylenetetrahydrofolate--tRNA-(uracil-5-)-methyltransferase TrmFO.